The following is a 428-amino-acid chain: GTPase Obg (428 aa).

Residues 1–158 (MFVDQTKIDV…RTLRLELKVL (158 aa)) form the Obg domain. The 170-residue stretch at 159 to 328 (ADVGLVGFPS…LMGKTADLVE (170 aa)) folds into the OBG-type G domain. GTP-binding positions include 165–172 (GFPSVGKS), 190–194 (FTTLT), 212–215 (DLPG), 282–285 (TQMD), and 309–311 (SSV). Residues Ser172 and Thr192 each coordinate Mg(2+). The 79-residue stretch at 350-428 (YKKPEDEGFK…IADFTFEFVD (79 aa)) folds into the OCT domain.

The protein belongs to the TRAFAC class OBG-HflX-like GTPase superfamily. OBG GTPase family. As to quaternary structure, monomer. It depends on Mg(2+) as a cofactor.

The protein localises to the cytoplasm. In terms of biological role, an essential GTPase which binds GTP, GDP and possibly (p)ppGpp with moderate affinity, with high nucleotide exchange rates and a fairly low GTP hydrolysis rate. Plays a role in control of the cell cycle, stress response, ribosome biogenesis and in those bacteria that undergo differentiation, in morphogenesis control. The sequence is that of GTPase Obg from Lactobacillus johnsonii (strain CNCM I-12250 / La1 / NCC 533).